A 1682-amino-acid chain; its full sequence is Collagen alpha-4(IV) chain (1682 aa).

Residues 1-32 form the signal peptide; sequence MRCFFRWTKSFVTAPWSLIFILFTIQYEYGSG. The tract at residues 31–56 is 7S domain; the sequence is SGKKYGGPCGGRNCSVCQCFPEKGSR. Asn-43 is a glycosylation site (N-linked (GlcNAc...) asparagine). Disordered regions lie at residues 56–255 and 379–1453; these read RGHP…VQPP and PGPP…FGPG. Residues 57-1451 form a triple-helical region region; the sequence is GHPGPLGPQG…TGDPGPKGFG (1395 aa). The Cell attachment site signature appears at 86 to 88; it reads RGD. Over residues 103 to 116 the composition is skewed to low complexity; sequence PTGVPGFPGVDGVP. An N-linked (GlcNAc...) asparagine glycan is attached at Asn-134. Short sequence motifs (cell attachment site) lie at residues 137-139 and 181-183; these read RGD. The segment covering 396–410 has biased composition (pro residues); sequence MGPPGPPGVPGPPGF. A compositionally biased stretch (low complexity) spans 411-426; sequence PGEAGVPGRLDCAPGK. Residues 487–500 are compositionally biased toward pro residues; that stretch reads PPGPMGPPGPPGPP. Basic and acidic residues predominate over residues 578 to 601; it reads DGGDGRPGERGDPGPRGDHKDAAP. Short sequence motifs (cell attachment site) lie at residues 587 to 589 and 593 to 595; these read RGD. Over residues 609–621 the composition is skewed to pro residues; sequence LPGPPGRTGPEGP. Residues 632 to 647 show a composition bias toward low complexity; the sequence is QRGLPGEPGRPGTRGF. The N-linked (GlcNAc...) asparagine glycan is linked to Asn-661. Low complexity predominate over residues 665–682; sequence PGKPGLPGLDGPPGLKGF. The short motif at 716–718 is the Cell attachment site element; it reads RGD. Composition is skewed to low complexity over residues 742–758 and 857–902; these read PGKD…AFGD and PAGM…LPGL. 2 stretches are compositionally biased toward basic and acidic residues: residues 911-929 and 938-950; these read ERGK…EVGE and DLGE…DRGL. The segment covering 969–978 has biased composition (gly residues); sequence GPPGDGGFSG. 2 short sequence motifs (cell attachment site) span residues 980-982 and 992-994; these read RGD. The segment covering 998–1010 has biased composition (low complexity); that stretch reads DGLPGLHRGQPGI. A compositionally biased stretch (pro residues) spans 1011–1025; the sequence is DGPPGPPGPPGPPGS. The segment covering 1034–1044 has biased composition (low complexity); the sequence is FPGFPGDQGDP. The short motif at 1144 to 1146 is the Cell attachment site element; the sequence is RGD. Composition is skewed to pro residues over residues 1223–1235, 1248–1272, 1289–1304, 1340–1351, and 1435–1444; these read PGPP…PGPA, DPGP…PPGS, PGPP…PGCQ, PGPPGRKGPVGP, and APGPPGPTGD. Residues 1457–1682 form the Collagen IV NC1 domain; sequence GFLLVLHSQT…SRCQVCMKHS (226 aa). Disulfide bonds link Cys-1472-Cys-1561, Cys-1505-Cys-1558, Cys-1517-Cys-1523, Cys-1580-Cys-1678, Cys-1614-Cys-1675, and Cys-1626-Cys-1633.

This sequence belongs to the type IV collagen family. In terms of assembly, there are six type IV collagen isoforms, alpha 1(IV)-alpha 6(IV), each of which can form a triple helix structure with 2 other chains to generate type IV collagen network. The alpha 3(IV) chain forms a triple helical protomer with alpha 4(IV) and alpha 5(IV); this triple helical structure dimerizes through NC1-NC1 domain interactions such that the alpha 3(IV), alpha 4(IV) and alpha 5(IV) chains of one protomer connect with the alpha 5(IV), alpha 4(IV) and alpha 3(IV) chains of the opposite protomer, respectively. Associates with LAMB2 at the neuromuscular junction and in GBM. Prolines at the third position of the tripeptide repeating unit (G-X-Y) are hydroxylated in some or all of the chains. Post-translationally, type IV collagens contain numerous cysteine residues which are involved in inter- and intramolecular disulfide bonding. 12 of these, located in the NC1 domain, are conserved in all known type IV collagens. In terms of processing, the trimeric structure of the NC1 domains is stabilized by covalent bonds between Lys and Met residues. In terms of tissue distribution, expressed in Bruch's membrane, outer plexiform layer, inner nuclear layer, inner plexiform layer, ganglion cell layer, inner limiting membrane and around the blood vessels of the retina (at protein level). Highly expressed in kidney and lung. Detected at lower levels in heart, muscle and skin.

The protein resides in the secreted. The protein localises to the extracellular space. Its subcellular location is the extracellular matrix. It localises to the basement membrane. Type IV collagen is the major structural component of glomerular basement membranes (GBM), forming a 'chicken-wire' meshwork together with laminins, proteoglycans and entactin/nidogen. In Mus musculus (Mouse), this protein is Collagen alpha-4(IV) chain.